The following is a 465-amino-acid chain: Hydroxyacid-oxoacid transhydrogenase, mitochondrial (465 aa).

K443 carries the N6-acetyllysine modification. S450 carries the post-translational modification Phosphoserine.

It belongs to the iron-containing alcohol dehydrogenase family. Hydroxyacid-oxoacid transhydrogenase subfamily. Expressed in white and brown adipose tissues, liver, and kidney. Expression is differentiation-dependent during in vitro brown and white adipogenesis.

It is found in the mitochondrion. It catalyses the reaction (S)-3-hydroxybutanoate + 2-oxoglutarate = (R)-2-hydroxyglutarate + acetoacetate. The enzyme catalyses 4-hydroxybutanoate + 2-oxoglutarate = (R)-2-hydroxyglutarate + succinate semialdehyde. Catalyzes the cofactor-independent reversible oxidation of gamma-hydroxybutyrate (GHB) to succinic semialdehyde (SSA) coupled to reduction of 2-ketoglutarate (2-KG) to D-2-hydroxyglutarate (D-2-HG). L-3-hydroxybutyrate (L-3-OHB) is also a substrate for HOT when using 2-KG as hydrogen acceptor, resulting in the formation of D-2-HG. This chain is Hydroxyacid-oxoacid transhydrogenase, mitochondrial (Adhfe1), found in Mus musculus (Mouse).